Here is a 289-residue protein sequence, read N- to C-terminus: MILLQHAGLPPPKRPSSSPPMSVAARSTGALQLPPQKPFGQEASLPLAGEEEPPKGGEQDTALEELCKPLYCKLCNVTLNSAQQAQAHYQGKNHGKKLRNYYAANSCPPPARMSNAVEAVAAPAVSVPPQMGSFKPGGRVILATENDYCKLCDASFSSPAVAQAHYQGKNHAKRLRLAEAQSNSFSDSSEVGQRRTRKEGNEYKMMPNRRNMYAVQNNSAGPYFNPRSRQRIPRDLAMCVTPSGQFYCSMCNVGAGEEVEFRQHLESKQHKSKVSEQRYRNEMENLGYV.

Residues 1–59 (MILLQHAGLPPPKRPSSSPPMSVAARSTGALQLPPQKPFGQEASLPLAGEEEPPKGGEQ) form a disordered region. Over residues 9–18 (LPPPKRPSSS) the composition is skewed to pro residues. 2 Matrin-type zinc fingers span residues 70–100 (LYCKLCNVTLNSAQQAQAHYQGKNHGKKLRN) and 147–177 (DYCKLCDASFSSPAVAQAHYQGKNHAKRLRL). Positions 180–191 (AQSNSFSDSSEV) are enriched in polar residues. Positions 180 to 200 (AQSNSFSDSSEVGQRRTRKEG) are disordered. A Matrin-type 3 zinc finger spans residues 246–276 (FYCSMCNVGAGEEVEFRQHLESKQHKSKVSE).

In terms of assembly, interacts with dsRNA.

It localises to the nucleus. The protein resides in the nucleolus. Functionally, acts as a bona fide target gene of p53/TP53. May play a role in the TP53-dependent growth regulatory pathway. May contribute to TP53-mediated apoptosis by regulation of TP53 expression and translocation to the nucleus and nucleolus. The sequence is that of Zinc finger matrin-type protein 3 from Bos taurus (Bovine).